The primary structure comprises 208 residues: High frequency lysogenization protein HflD homolog (208 aa).

Belongs to the HflD family.

The protein localises to the cytoplasm. It localises to the cell inner membrane. The protein is High frequency lysogenization protein HflD homolog of Edwardsiella ictaluri (strain 93-146).